The following is a 631-amino-acid chain: Phosphomethylpyrimidine synthase (631 aa).

Substrate contacts are provided by residues Asn-239, Met-268, Tyr-297, His-333, 353-355 (SRG), 394-397 (DGLR), and Glu-433. His-437 lines the Zn(2+) pocket. Residue Tyr-460 coordinates substrate. Zn(2+) is bound at residue His-501. [4Fe-4S] cluster contacts are provided by Cys-581, Cys-584, and Cys-589.

It belongs to the ThiC family. Homodimer. [4Fe-4S] cluster serves as cofactor.

It catalyses the reaction 5-amino-1-(5-phospho-beta-D-ribosyl)imidazole + S-adenosyl-L-methionine = 4-amino-2-methyl-5-(phosphooxymethyl)pyrimidine + CO + 5'-deoxyadenosine + formate + L-methionine + 3 H(+). It functions in the pathway cofactor biosynthesis; thiamine diphosphate biosynthesis. Functionally, catalyzes the synthesis of the hydroxymethylpyrimidine phosphate (HMP-P) moiety of thiamine from aminoimidazole ribotide (AIR) in a radical S-adenosyl-L-methionine (SAM)-dependent reaction. The chain is Phosphomethylpyrimidine synthase from Salmonella paratyphi C (strain RKS4594).